Reading from the N-terminus, the 548-residue chain is DNA ligase (548 aa).

Residue E252 participates in ATP binding. Residue K254 is the N6-AMP-lysine intermediate of the active site. Residues R259, R274, E303, F343, R414, and K420 each contribute to the ATP site.

This sequence belongs to the ATP-dependent DNA ligase family. The cofactor is Mg(2+).

The catalysed reaction is ATP + (deoxyribonucleotide)n-3'-hydroxyl + 5'-phospho-(deoxyribonucleotide)m = (deoxyribonucleotide)n+m + AMP + diphosphate.. Its function is as follows. DNA ligase that seals nicks in double-stranded DNA during DNA replication, DNA recombination and DNA repair. This chain is DNA ligase, found in Natronomonas pharaonis (strain ATCC 35678 / DSM 2160 / CIP 103997 / JCM 8858 / NBRC 14720 / NCIMB 2260 / Gabara) (Halobacterium pharaonis).